Reading from the N-terminus, the 477-residue chain is MYNRKDRDVHERKEDGQSEFEALNGTNAIMSDNSKAYSIKFLTFNTWGLKYVSKHRKERLRAIADKLAGHSMLTPISDELLPNGGDSNENEDYDVIALQEIWCVEDWKYLASACASKYPYQRLFHSGILTGPGLAILSKVPIESTFLYRFPINGRPSAVFRGDWYVGKSIAITVLNTGTRPIAIMNSHMHAPYAKQGDAAYLCHRSCQAWDFSRLIKLYRQAGYAVIVVGDLNSRPGSLPHKFLTQEAGLVDSWEQLHGKQDLAVIARLSPLQQLLKGCTTCDSLLNTWRAQRQPDEACRLDYALIDPDFLQTVDAGVRFTERIPHLDCSVSDHFAYSCTLNIVPQGTESRPSTSVKRAKTHDRELILQRYSNYETMIECIHTYLKTAQRQKFFRGLHFWASILLLIASLVVTTFTANKAGWSSIFWVLFAIAVSISGTIDGAISFLFGRSEIRALIEVEQEVLDAEHHLQTFLSEK.

Residues 1–398 (MYNRKDRDVH…QRQKFFRGLH (398 aa)) lie on the Cytoplasmic side of the membrane. Mg(2+) is bound at residue glutamate 100. Catalysis depends on histidine 334, which acts as the Proton acceptor. A helical transmembrane segment spans residues 399-417 (FWASILLLIASLVVTTFTA). Over 418 to 424 (NKAGWSS) the chain is Mitochondrial intermembrane. A helical transmembrane segment spans residues 425 to 449 (IFWVLFAIAVSISGTIDGAISFLFG). Over 450 to 477 (RSEIRALIEVEQEVLDAEHHLQTFLSEK) the chain is Cytoplasmic.

It belongs to the neutral sphingomyelinase family. The cofactor is Mg(2+).

The protein resides in the endoplasmic reticulum membrane. It localises to the mitochondrion outer membrane. The catalysed reaction is an N-acyl-(4R)-4-hydroxysphinganine-1-phosphoinositol + H2O = 1D-myo-inositol 1-phosphate + an N-acyl-(4R)-4-hydroxysphinganine + H(+). It carries out the reaction a mannosylinositol-1-phospho-N-acyl-sphingoid base + H2O = mannosylinositol-1-phosphate + an N-acyl-sphingoid base + H(+). The enzyme catalyses an inositol phosphomannosylinositol-1-phospho-N-acyl-(4R)-4-hydroxysphinganine + H2O = mannosyldiinositol-1-phosphate + an N-acyl-(4R)-4-hydroxysphinganine + H(+). Its pathway is lipid metabolism; sphingolipid metabolism. Activated through localization to mitochondria in specific growth phases. Functionally, responsible for the hydrolysis of the phosphosphingolipids (IPS), inositol phosphorylceramide (IPC), mannosylinositol phosphorylceramide (MIPC), and mannosyldiinositol phosphorylceramide (M(IP)2C). Regulates sphingolipid metabolism in mitochondria, especially the formation of alpha-hydroxylated very long chain phytoceramides. The generated ceramides contribute to the normal function of mitochondria. Also active on sphingomyelin (SM), but this activity is probably not physiologically relevant. The protein is Inositol phosphosphingolipids phospholipase C of Saccharomyces cerevisiae (strain ATCC 204508 / S288c) (Baker's yeast).